We begin with the raw amino-acid sequence, 198 residues long: UPF0314 protein Atu8092 (198 aa).

The next 3 helical transmembrane spans lie at 14–34 (LRWF…LYAM), 64–84 (WYTP…WLLF), and 150–170 (VPVW…GWLI).

Belongs to the UPF0314 family.

It is found in the cell membrane. The chain is UPF0314 protein Atu8092 from Agrobacterium fabrum (strain C58 / ATCC 33970) (Agrobacterium tumefaciens (strain C58)).